Here is a 216-residue protein sequence, read N- to C-terminus: uncharacterized protein (216 aa).

One can recognise a 4Fe-4S ferredoxin-type domain in the interval 18-47 (PPDSPIEDRCGSCNICVDSCPTGALVQGGQ). Residues C27, C30, C33, C37, C79, C82, and C86 each contribute to the [4Fe-4S] cluster site.

This is an uncharacterized protein from Geobacillus stearothermophilus (Bacillus stearothermophilus).